A 301-amino-acid chain; its full sequence is E3 ubiquitin-protein ligase RNF144B (301 aa).

The TRIAD supradomain stretch occupies residues 26–242; sequence PLVTCKLCLC…YDKGPCRNKL (217 aa). Zn(2+)-binding residues include C30, C33, C53, C56, C121, C126, C145, C148, C153, C156, H161, C166, C191, and C194. Residues 30-80 form an RING-type 1 zinc finger; sequence CKLCLCEQSLDKMTMLQECQCIFCTPCLKQYMVLSIREGCGSPITCPDMVC. The IBR-type zinc finger occupies 101 to 166; the sequence is QLYQRLKFER…KDAWHEESSC (66 aa). An RING-type 2; atypical zinc finger spans residues 191–220; sequence CPVCRIYIERNEGCAQMMCKNCKHTFCWYC. C204 is an active-site residue. Residues C209, C212, C217, C220, H232, and C238 each contribute to the Zn(2+) site. Residues 256 to 276 form a helical membrane-spanning segment; sequence VVGILVGLGVIALVTSPLLLL.

Belongs to the RBR family. RNF144 subfamily. As to quaternary structure, interacts with UBE2L3, UBE2L6 and LCMT2, as well as with BAX. Interacts with TBK1; this interaction inhibits TBK1 phosphorylation and 'Lys-63'-linked polyubiquitination. Auto-ubiquitinated.

Its subcellular location is the mitochondrion membrane. The protein resides in the cytoplasm. It catalyses the reaction [E2 ubiquitin-conjugating enzyme]-S-ubiquitinyl-L-cysteine + [acceptor protein]-L-lysine = [E2 ubiquitin-conjugating enzyme]-L-cysteine + [acceptor protein]-N(6)-ubiquitinyl-L-lysine.. It functions in the pathway protein modification; protein ubiquitination. E3 ubiquitin-protein ligase which accepts ubiquitin from E2 ubiquitin-conjugating enzymes UBE2L3 and UBE2L6 in the form of a thioester and then directly transfers the ubiquitin to targeted substrates such as LCMT2, thereby promoting their degradation. Induces apoptosis via a p53/TP53-dependent but caspase-independent mechanism. Plays a crucial role in maintaining the genomic stability by controlling the degradation of multiple proteins involved in mitotic progression and DNA damage. Regulates epithelial homeostasis by mediating degradation of CDKN1A and isoform 2 of TP63. Plays a regulatory role in innate immunity by negatively regulating IRF3 activation and IFN-beta production. Mechanistically, inhibits TBK1 phosphorylation and 'Lys-63'-linked polyubiquitination independently of its E3 ligase activity. Alternatively, promotes 'Lys-27' and 'Lys-33'-linked ubiquitination of IFIH1/MDA5, promoting selective autophagic degradation of IFIH1/MDA5 to inhibit antiviral response. The protein is E3 ubiquitin-protein ligase RNF144B (Rnf144b) of Mus musculus (Mouse).